The chain runs to 464 residues: UDP-N-acetylmuramoyl-tripeptide--D-alanyl-D-alanine ligase (464 aa).

125–131 (GSNGKTT) contacts ATP.

It belongs to the MurCDEF family. MurF subfamily.

It is found in the cytoplasm. It carries out the reaction D-alanyl-D-alanine + UDP-N-acetyl-alpha-D-muramoyl-L-alanyl-gamma-D-glutamyl-meso-2,6-diaminopimelate + ATP = UDP-N-acetyl-alpha-D-muramoyl-L-alanyl-gamma-D-glutamyl-meso-2,6-diaminopimeloyl-D-alanyl-D-alanine + ADP + phosphate + H(+). The protein operates within cell wall biogenesis; peptidoglycan biosynthesis. Its function is as follows. Involved in cell wall formation. Catalyzes the final step in the synthesis of UDP-N-acetylmuramoyl-pentapeptide, the precursor of murein. This Borreliella burgdorferi (strain ATCC 35210 / DSM 4680 / CIP 102532 / B31) (Borrelia burgdorferi) protein is UDP-N-acetylmuramoyl-tripeptide--D-alanyl-D-alanine ligase.